The primary structure comprises 206 residues: Ribosomal RNA large subunit methyltransferase E (206 aa).

5 residues coordinate S-adenosyl-L-methionine: G60, W62, D80, D96, and D121. Residue K161 is the Proton acceptor of the active site.

The protein belongs to the class I-like SAM-binding methyltransferase superfamily. RNA methyltransferase RlmE family.

It localises to the cytoplasm. It carries out the reaction uridine(2552) in 23S rRNA + S-adenosyl-L-methionine = 2'-O-methyluridine(2552) in 23S rRNA + S-adenosyl-L-homocysteine + H(+). Its function is as follows. Specifically methylates the uridine in position 2552 of 23S rRNA at the 2'-O position of the ribose in the fully assembled 50S ribosomal subunit. In Saccharophagus degradans (strain 2-40 / ATCC 43961 / DSM 17024), this protein is Ribosomal RNA large subunit methyltransferase E.